We begin with the raw amino-acid sequence, 337 residues long: Pentalenene synthase (337 aa).

The Mg(2+) site is built by Asp80, Asp84, Asn219, Ser223, and Glu227. The DDXXD motif signature appears at 80–84 (DDLFD).

It belongs to the terpene synthase family. Monomer. It depends on Mg(2+) as a cofactor.

It carries out the reaction (2E,6E)-farnesyl diphosphate = pentalenene + diphosphate. The protein operates within sesquiterpene biosynthesis; pentalenene biosynthesis; pentalenene from farnesyl diphosphate: step 1/1. It functions in the pathway antibiotic biosynthesis; pentalenolactone biosynthesis. Its function is as follows. Catalyzes the cyclization of farnesyl diphosphate (FPP) to the tricyclic sesquiterpene pentalenene, which is the hydrocarbon precursor of the pentalenolactone family of antibiotics produced by a variety of Streptomyces species. This is Pentalenene synthase (pntA) from Streptomyces arenae.